The following is a 55-amino-acid chain: Cytochrome b-c1 complex subunit 9 (55 aa).

The Mitochondrial matrix portion of the chain corresponds to 1 to 15 (MKVIYNTLFKRTSTY). The chain crosses the membrane as a helical span at residues 16-41 (AVAIIASAFFFERALDVTSVAIFEGI). Topologically, residues 42-55 (NKGKLWKDIKGKYE) are chloroplast intermembrane.

This sequence belongs to the UQCR10/QCR9 family. Component of the ubiquinol-cytochrome c oxidoreductase (cytochrome b-c1 complex, complex III, CIII), a multisubunit enzyme composed of 3 respiratory subunits cytochrome b, cytochrome c1 and Rieske protein, 2 core protein subunits, and additional low-molecular weight protein subunits. The complex exists as an obligatory dimer and forms supercomplexes (SCs) in the inner mitochondrial membrane with cytochrome c oxidase (complex IV, CIV).

The protein localises to the mitochondrion inner membrane. Functionally, component of the ubiquinol-cytochrome c oxidoreductase, a multisubunit transmembrane complex that is part of the mitochondrial electron transport chain which drives oxidative phosphorylation. The respiratory chain contains 3 multisubunit complexes succinate dehydrogenase (complex II, CII), ubiquinol-cytochrome c oxidoreductase (cytochrome b-c1 complex, complex III, CIII) and cytochrome c oxidase (complex IV, CIV), that cooperate to transfer electrons derived from NADH and succinate to molecular oxygen, creating an electrochemical gradient over the inner membrane that drives transmembrane transport and the ATP synthase. The cytochrome b-c1 complex catalyzes electron transfer from ubiquinol to cytochrome c, linking this redox reaction to translocation of protons across the mitochondrial inner membrane, with protons being carried across the membrane as hydrogens on the quinol. In the process called Q cycle, 2 protons are consumed from the matrix, 4 protons are released into the intermembrane space and 2 electrons are passed to cytochrome c. This is Cytochrome b-c1 complex subunit 9 (ox) from Drosophila melanogaster (Fruit fly).